The chain runs to 314 residues: tRNA pseudouridine synthase B (314 aa).

His-43 is a substrate binding site. The active-site Nucleophile is Asp-48. Residues Tyr-76, Tyr-179, and Leu-200 each coordinate substrate.

It belongs to the pseudouridine synthase TruB family. Type 1 subfamily.

The catalysed reaction is uridine(55) in tRNA = pseudouridine(55) in tRNA. Its function is as follows. Responsible for synthesis of pseudouridine from uracil-55 in the psi GC loop of transfer RNAs. This chain is tRNA pseudouridine synthase B, found in Salmonella typhi.